The following is a 394-amino-acid chain: Elongation factor Tu (394 aa).

The tr-type G domain occupies 10–204; that stretch reads KPHVNIGTIG…AVDSYIPQPV (195 aa). The tract at residues 19 to 26 is G1; it reads GHVDHGKT. 19–26 is a GTP binding site; sequence GHVDHGKT. Thr-26 contributes to the Mg(2+) binding site. The tract at residues 60-64 is G2; the sequence is GITIS. A G3 region spans residues 81–84; sequence DCPG. Residues 81–85 and 136–139 contribute to the GTP site; these read DCPGH and NKVD. A G4 region spans residues 136-139; the sequence is NKVD. The interval 174-176 is G5; sequence SAL.

It belongs to the TRAFAC class translation factor GTPase superfamily. Classic translation factor GTPase family. EF-Tu/EF-1A subfamily. As to quaternary structure, monomer.

The protein localises to the cytoplasm. The catalysed reaction is GTP + H2O = GDP + phosphate + H(+). GTP hydrolase that promotes the GTP-dependent binding of aminoacyl-tRNA to the A-site of ribosomes during protein biosynthesis. This Rickettsia rhipicephali protein is Elongation factor Tu.